The sequence spans 544 residues: MKPAELKRLYRIVKVQLEYGLDELLPEHHLTRAPLLARKSLFWLRNQHADKALGDRLRLALQELGPVWIKFGQMMSTRRDLFPPHIADPLAMLQDKVAPFDGLQAKQLIEEELGAPLETWFDDFDIKPLASASIAQVHTAKLKSNGRDVVLKVIRPDIRPQIDADIKLMYRVARIVAKALPEARRLKPVEVVREYEKTLLDELDLRREAANAIQLRRNFENSEELYVPEVLTDFCNETVMVSERIYGIQVSDLAGLHANGTNMKLLAERGVSVFFTQVFRDSFFHADMHPGNVFVNPNHPENPQWIGLDCGIVGTLNSEDKRYLAENFLAFFNRDYRRVAQLHVDSGWVPLDTNVDEFEVAIRMVCEPIFAKPLCEISFGHVLLNLFNTARRFNMEVQPQLVLLQKTLLYVEGLGRQLYPQLDLWQTAKPFLEKWMANQVGPQAFLHALKERAPLWFEKMPELPELLYDSLKQGRNLNQRLDNLYQGYRQSKRQQGTGKFLFGVGATLVVCSAIWISNQLEPLAIGSATIGVLCWLLSWRAYRQ.

One can recognise a Protein kinase domain in the interval 123–501; sequence DFDIKPLASA…KRQQGTGKFL (379 aa). Residues 129–137 and Lys152 contribute to the ATP site; that span reads LASASIAQV. The active-site Proton acceptor is Asp287. 2 consecutive transmembrane segments (helical) span residues 496–516 and 519–539; these read GTGKFLFGVGATLVVCSAIWI and QLEPLAIGSATIGVLCWLLSW.

The protein belongs to the ABC1 family. UbiB subfamily.

It localises to the cell inner membrane. It participates in cofactor biosynthesis; ubiquinone biosynthesis [regulation]. Its function is as follows. Is probably a protein kinase regulator of UbiI activity which is involved in aerobic coenzyme Q (ubiquinone) biosynthesis. The polypeptide is Probable protein kinase UbiB (Vibrio cholerae serotype O1 (strain ATCC 39315 / El Tor Inaba N16961)).